Here is a 472-residue protein sequence, read N- to C-terminus: D-inositol 3-phosphate glycosyltransferase (472 aa).

His-48 is a 1D-myo-inositol 3-phosphate binding site. UDP-N-acetyl-alpha-D-glucosamine-binding positions include 54–55 (QP) and Gly-62. 1D-myo-inositol 3-phosphate is bound by residues 59–64 (DAGGMN), Lys-117, Tyr-150, Thr-174, and Arg-194. Residues Arg-282, Lys-287, and Val-348 each coordinate UDP-N-acetyl-alpha-D-glucosamine. Mg(2+) is bound by residues Phe-357, Arg-358, and Ala-360. UDP-N-acetyl-alpha-D-glucosamine contacts are provided by Glu-370 and Glu-378. Thr-384 contributes to the Mg(2+) binding site.

This sequence belongs to the glycosyltransferase group 1 family. MshA subfamily. In terms of assembly, homodimer.

The catalysed reaction is 1D-myo-inositol 3-phosphate + UDP-N-acetyl-alpha-D-glucosamine = 1D-myo-inositol 2-acetamido-2-deoxy-alpha-D-glucopyranoside 3-phosphate + UDP + H(+). Functionally, catalyzes the transfer of a N-acetyl-glucosamine moiety to 1D-myo-inositol 3-phosphate to produce 1D-myo-inositol 2-acetamido-2-deoxy-glucopyranoside 3-phosphate in the mycothiol biosynthesis pathway. The protein is D-inositol 3-phosphate glycosyltransferase of Streptomyces griseus subsp. griseus (strain JCM 4626 / CBS 651.72 / NBRC 13350 / KCC S-0626 / ISP 5235).